The following is a 416-amino-acid chain: CBL-interacting serine/threonine-protein kinase 21 (416 aa).

One can recognise a Protein kinase domain in the interval 12-264 (YEIGRTIGEG…AEIIIKDSWF (253 aa)). ATP is bound by residues 18–26 (IGEGNFAKV) and Lys-41. Residue Asp-134 is the Proton acceptor of the active site. The segment at 152-178 (DFGLSAVPKSGDMLSTACGSPCYIAPE) is activation loop. A Phosphoserine modification is found at Ser-156. Thr-167 is subject to Phosphothreonine. The 25-residue stretch at 291 to 315 (ASSNFINAFQIIAMSSDLDLSGLFE) folds into the NAF domain. The PPI stretch occupies residues 321–351 (RYKTRIGSKNTAQETIKKIEAAATYVSLSVE).

This sequence belongs to the protein kinase superfamily. CAMK Ser/Thr protein kinase family. SNF1 subfamily. In terms of assembly, interacts with CBL9. It depends on Mn(2+) as a cofactor.

The enzyme catalyses L-seryl-[protein] + ATP = O-phospho-L-seryl-[protein] + ADP + H(+). It carries out the reaction L-threonyl-[protein] + ATP = O-phospho-L-threonyl-[protein] + ADP + H(+). In terms of biological role, CIPK serine-threonine protein kinases interact with CBL proteins. Binding of a CBL protein to the regulatory NAF domain of CIPK protein lead to the activation of the kinase in a calcium-dependent manner. In Arabidopsis thaliana (Mouse-ear cress), this protein is CBL-interacting serine/threonine-protein kinase 21 (CIPK21).